Here is a 280-residue protein sequence, read N- to C-terminus: MATNKRTLSRIGFYCGLALFLIITLFPFFVMLMTSFKGAKEAISLHPTLLPQQWTLEHYVDIFNPMIFPFVDYFRNSLVVSVVSSVVAVFLGILGAYALSRLRFKGRMTINASFYTVYMFSGILLVVPLFKIITALGIYDTEMALIITMVTQTLPTAVFMLKSYFDTIPDEIEEAAMMDGLNRLQIIFRITVPLAMSGLISVFVYCFMVAWNDYLFASIFLSSASNFTLPVGLNALFSTPDYIWGRMMAASLVTALPVVIMYALSERFIKSGLTAGGVKG.

Residues Met1–Arg10 lie on the Cytoplasmic side of the membrane. The helical transmembrane segment at Ile11–Met31 threads the bilayer. Residues Leu32–Gln53 lie on the Periplasmic side of the membrane. The helical transmembrane segment at Trp54–Phe74 threads the bilayer. An ABC transmembrane type-1 domain is found at Phe74–Ser265. The Cytoplasmic portion of the chain corresponds to Arg75–Ser77. A helical membrane pass occupies residues Leu78–Ala98. Residues Leu99 to Val117 are Periplasmic-facing. The chain crosses the membrane as a helical span at residues Tyr118–Ile138. Topologically, residues Tyr139–Asp140 are cytoplasmic. Residues Thr141 to Leu161 form a helical membrane-spanning segment. Over Lys162–Arg189 the chain is Periplasmic. The chain crosses the membrane as a helical span at residues Ile190–Ala210. The Cytoplasmic segment spans residues Trp211–Tyr214. The chain crosses the membrane as a helical span at residues Leu215–Ala235. At Leu236–Tyr242 the chain is on the periplasmic side. The helical transmembrane segment at Ile243–Ala263 threads the bilayer. The Cytoplasmic segment spans residues Leu264–Gly280.

It belongs to the binding-protein-dependent transport system permease family. MalFG subfamily.

The protein localises to the cell inner membrane. Functionally, probably part of the binding-protein-dependent transport system YcjNOP. Probably responsible for the translocation of the substrate across the membrane. The protein is Inner membrane ABC transporter permease protein YcjP (ycjP) of Escherichia coli (strain K12).